The sequence spans 684 residues: RNA helicase NPH-II (684 aa).

In terms of domain architecture, Helicase ATP-binding spans 184–359 (FRAWAARRPT…EFFPDAEFVH (176 aa)). Residue 197–204 (GGTGVGKT) coordinates ATP. A DEXH box motif is present at residues 308–311 (DEVH). In terms of domain architecture, Helicase C-terminal spans 392 to 563 (NVSAALSAHR…DLYVQPSDLE (172 aa)).

The protein belongs to the DEAD box helicase family. DEAH subfamily. Monomer.

It localises to the virion. It catalyses the reaction ATP + H2O = ADP + phosphate + H(+). NTP-dependent helicase that catalyzes unidirectional unwinding of 3'tailed duplex RNAs and plays an important role during transcription of early mRNAs, presumably by preventing R-loop formation behind the elongating RNA polymerase. Might also play a role in the export of newly synthesized mRNA chains out of the core into the cytoplasm. Required for replication and propagation of viral particles. The chain is RNA helicase NPH-II (NPH2) from Homo sapiens (Human).